The chain runs to 668 residues: MDKETAKQRAEELRRTINKYSYEYYTLDEPSVPDAEYDRLMQELIAIEEEHPDLRTPDSPTQRVGGAVLEAFQKVTHGTPMLSLGNAFNADDLRDFDRRVRQSVGDDVAYNVELKIDGLAVSLRYEDGYFVRGATRGDGTTGEDITENLKTIRNIPLKMNRELSIEVRGEAYMPKRSFEALNEERIKNEEEPFANPRNAAAGSLRQLDPKIAAKRNLDIFVYSIAELDEMGVETQSQGLDFLDELGFKTNQERKKCGSIEEVITLIDELQAKRADLPYEIDGIVIKVDSLDQQEELGFTAKSPRWAIAYKFPAEEVVTKLLDIELNVGRTGVITPTAILEPVKVAGTTVSRASLHNEDLIKEKDIRILDKVVVKKAGDIIPEVVNVLVDQRTGEEKEFSMPTECPECGSELVRIEGEVALRCINPECPAQIREGLIHFVSRNAMNIDGLGERVITQLFEENLVRNVADLYKLTKERVIQLERMGEKSTENLISSIQKSKENSLERLLFGLGIRFIGSKAAKTLAMHFESLENLKKASKEELLAVDEIGEKMADAVITYFHKEEMLELLNELQELGVNTLYKGPKKVKAEDSDSYFAGKTIVLTGKLEELSRNEAKAQIEALGGKLTGSVSKNTDLVIAGEAAGSKLTKAQELNIEVWNEEQLMGELKK.

Residues 34 to 38 (DAEYD), 83 to 84 (SL), and glutamate 113 each bind NAD(+). The active-site N6-AMP-lysine intermediate is lysine 115. NAD(+) contacts are provided by arginine 136, glutamate 170, lysine 286, and lysine 310. Zn(2+)-binding residues include cysteine 404, cysteine 407, cysteine 422, and cysteine 427. Positions 590 to 668 (DSDSYFAGKT…EEQLMGELKK (79 aa)) constitute a BRCT domain.

The protein belongs to the NAD-dependent DNA ligase family. LigA subfamily. Mg(2+) is required as a cofactor. The cofactor is Mn(2+).

The catalysed reaction is NAD(+) + (deoxyribonucleotide)n-3'-hydroxyl + 5'-phospho-(deoxyribonucleotide)m = (deoxyribonucleotide)n+m + AMP + beta-nicotinamide D-nucleotide.. Functionally, DNA ligase that catalyzes the formation of phosphodiester linkages between 5'-phosphoryl and 3'-hydroxyl groups in double-stranded DNA using NAD as a coenzyme and as the energy source for the reaction. It is essential for DNA replication and repair of damaged DNA. This is DNA ligase from Bacillus subtilis (strain 168).